The chain runs to 592 residues: Aspartate--tRNA(Asp/Asn) ligase (592 aa).

Position 177 (E177) interacts with L-aspartate. The aspartate stretch occupies residues 201 to 204 (QIFK). Residues R223 and H452 each contribute to the L-aspartate site. ATP is bound at residue 223 to 225 (RDE). E486 is an ATP binding site. R493 serves as a coordination point for L-aspartate. 538–541 (GIDR) is a binding site for ATP.

It belongs to the class-II aminoacyl-tRNA synthetase family. Type 1 subfamily. In terms of assembly, homodimer.

Its subcellular location is the cytoplasm. It carries out the reaction tRNA(Asx) + L-aspartate + ATP = L-aspartyl-tRNA(Asx) + AMP + diphosphate. Its function is as follows. Aspartyl-tRNA synthetase with relaxed tRNA specificity since it is able to aspartylate not only its cognate tRNA(Asp) but also tRNA(Asn). Reaction proceeds in two steps: L-aspartate is first activated by ATP to form Asp-AMP and then transferred to the acceptor end of tRNA(Asp/Asn). This Anaplasma marginale (strain Florida) protein is Aspartate--tRNA(Asp/Asn) ligase.